An 84-amino-acid polypeptide reads, in one-letter code: Succinate dehydrogenase membrane anchor subunit (84 aa).

The Mitochondrial matrix segment spans residues 1–3 (MIT). Residues 4-24 (FQWLIVRVVALFISLTILIDI) traverse the membrane as a helical segment. The Mitochondrial intermembrane portion of the chain corresponds to 25–31 (EMFVVML). A helical membrane pass occupies residues 32-52 (SFLIIHISIGLKAIIHDYIHF). Residue H37 coordinates heme. Y49 is a binding site for a ubiquinone. Residues 53–58 (QKIKLM) lie on the Mitochondrial matrix side of the membrane. The chain crosses the membrane as a helical span at residues 59-81 (LLILLRVSAIEISRSFRTFYIII). The Mitochondrial intermembrane segment spans residues 82-84 (KNT).

In terms of assembly, part of an enzyme complex containing four subunits: a flavoprotein, an iron-sulfur protein, plus two membrane-anchoring proteins. It depends on heme as a cofactor.

The protein localises to the mitochondrion inner membrane. The protein operates within carbohydrate metabolism; tricarboxylic acid cycle. In terms of biological role, membrane-anchoring subunit of succinate dehydrogenase (SDH). The sequence is that of Succinate dehydrogenase membrane anchor subunit (SDH4) from Chondrus crispus (Carrageen Irish moss).